We begin with the raw amino-acid sequence, 200 residues long: Guanylate kinase (200 aa).

The Guanylate kinase-like domain occupies 4–183; it reads GAVLIISGPS…AKEAMVAIAR (180 aa). 11–18 lines the ATP pocket; sequence GPSGCGKS.

It belongs to the guanylate kinase family.

The protein localises to the cytoplasm. It catalyses the reaction GMP + ATP = GDP + ADP. Its function is as follows. Essential for recycling GMP and indirectly, cGMP. This chain is Guanylate kinase, found in Helicobacter hepaticus (strain ATCC 51449 / 3B1).